Consider the following 672-residue polypeptide: Glycine--tRNA ligase beta subunit (672 aa).

This sequence belongs to the class-II aminoacyl-tRNA synthetase family. Tetramer of two alpha and two beta subunits.

It localises to the cytoplasm. The catalysed reaction is tRNA(Gly) + glycine + ATP = glycyl-tRNA(Gly) + AMP + diphosphate. This chain is Glycine--tRNA ligase beta subunit, found in Thermotoga sp. (strain RQ2).